The chain runs to 528 residues: Dihydromonacolin L monooxygenase LovA (528 aa).

The Cytoplasmic portion of the chain corresponds to M1–H23. The helical; Signal-anchor for type II membrane protein transmembrane segment at G24 to L44 threads the bilayer. At C45–L528 the chain is on the lumenal side. N-linked (GlcNAc...) asparagine glycosylation occurs at N399. C465 contributes to the heme binding site.

It belongs to the cytochrome P450 family. The cofactor is heme.

It is found in the membrane. It localises to the endoplasmic reticulum membrane. The enzyme catalyses dihydromonacolin L carboxylate + reduced [NADPH--hemoprotein reductase] + O2 = monacolin L carboxylate + oxidized [NADPH--hemoprotein reductase] + 2 H2O + H(+). The catalysed reaction is monacolin L carboxylate + reduced [NADPH--hemoprotein reductase] + O2 = monacolin J carboxylate + oxidized [NADPH--hemoprotein reductase] + H2O + H(+). It functions in the pathway polyketide biosynthesis; lovastatin biosynthesis. Dihydromonacolin L monooxygenase; part of the gene cluster that mediates the biosynthesis of lovastatin (also known as mevinolin, mevacor or monacolin K), a hypolipidemic inhibitor of (3S)-hydroxymethylglutaryl-coenzyme A (HMG-CoA) reductase (HMGR). The first step in the biosynthesis of lovastatin is the production of dihydromonacolin L acid by the lovastatin nonaketide synthase lovB and the trans-acting enoyl reductase lovC via condensation of one acetyl-CoA unit and 8 malonyl-CoA units. Dihydromonacolin L acid is released from lovB by the thioesterase lovG. Next, dihydromonacolin L acid is oxidized by the dihydromonacolin L monooxygenase lovA twice to form monacolin J acid. The 2-methylbutyrate moiety of lovastatin is synthesized by the lovastatin diketide synthase lovF via condensation of one acetyl-CoA unit and one malonyl-CoA unit. Finally, the covalent attachment of this moiety to monacolin J acid is catalyzed by the transesterase lovD to yield lovastatin. LovD has broad substrate specificity and can also convert monacolin J to simvastatin using alpha-dimethylbutanoyl-S-methyl-3-mercaptopropionate (DMB-S-MMP) as the thioester acyl donor, and can also catalyze the reverse reaction and function as hydrolase in vitro. LovD has much higher activity with LovF-bound 2-methylbutanoate than with free diketide substrates. The chain is Dihydromonacolin L monooxygenase LovA from Aspergillus terreus (strain NIH 2624 / FGSC A1156).